Reading from the N-terminus, the 323-residue chain is Acetyl-coenzyme A carboxylase carboxyl transferase subunit alpha (323 aa).

A CoA carboxyltransferase C-terminal domain is found at 39-293 (RLSKKSQQLT…RRALADSLRQ (255 aa)).

It belongs to the AccA family. Acetyl-CoA carboxylase is a heterohexamer composed of biotin carboxyl carrier protein (AccB), biotin carboxylase (AccC) and two subunits each of ACCase subunit alpha (AccA) and ACCase subunit beta (AccD).

It is found in the cytoplasm. It catalyses the reaction N(6)-carboxybiotinyl-L-lysyl-[protein] + acetyl-CoA = N(6)-biotinyl-L-lysyl-[protein] + malonyl-CoA. It functions in the pathway lipid metabolism; malonyl-CoA biosynthesis; malonyl-CoA from acetyl-CoA: step 1/1. In terms of biological role, component of the acetyl coenzyme A carboxylase (ACC) complex. First, biotin carboxylase catalyzes the carboxylation of biotin on its carrier protein (BCCP) and then the CO(2) group is transferred by the carboxyltransferase to acetyl-CoA to form malonyl-CoA. The polypeptide is Acetyl-coenzyme A carboxylase carboxyl transferase subunit alpha (Paraburkholderia phymatum (strain DSM 17167 / CIP 108236 / LMG 21445 / STM815) (Burkholderia phymatum)).